We begin with the raw amino-acid sequence, 125 residues long: Small ribosomal subunit protein uS13 (125 aa).

The protein belongs to the universal ribosomal protein uS13 family. As to quaternary structure, part of the 30S ribosomal subunit. Forms a loose heterodimer with protein S19. Forms two bridges to the 50S subunit in the 70S ribosome.

Located at the top of the head of the 30S subunit, it contacts several helices of the 16S rRNA. In the 70S ribosome it contacts the 23S rRNA (bridge B1a) and protein L5 of the 50S subunit (bridge B1b), connecting the 2 subunits; these bridges are implicated in subunit movement. Contacts the tRNAs in the A and P-sites. This chain is Small ribosomal subunit protein uS13, found in Orientia tsutsugamushi (strain Boryong) (Rickettsia tsutsugamushi).